A 151-amino-acid polypeptide reads, in one-letter code: Probable cGMP 3',5'-cyclic phosphodiesterase subunit delta (151 aa).

This sequence belongs to the PDE6D/unc-119 family. As to quaternary structure, interacts with Pde6.

It localises to the nucleus. Its subcellular location is the cytoplasm. The protein is Probable cGMP 3',5'-cyclic phosphodiesterase subunit delta of Drosophila persimilis (Fruit fly).